Reading from the N-terminus, the 241-residue chain is Ribonuclease P protein component 3 (241 aa).

Belongs to the eukaryotic/archaeal RNase P protein component 3 family. In terms of assembly, consists of a catalytic RNA component and at least 4-5 protein subunits.

It localises to the cytoplasm. It catalyses the reaction Endonucleolytic cleavage of RNA, removing 5'-extranucleotides from tRNA precursor.. In terms of biological role, part of ribonuclease P, a protein complex that generates mature tRNA molecules by cleaving their 5'-ends. In Methanococcoides burtonii (strain DSM 6242 / NBRC 107633 / OCM 468 / ACE-M), this protein is Ribonuclease P protein component 3.